The primary structure comprises 250 residues: NH(3)-dependent NAD(+) synthetase (250 aa).

Residue 30–37 (GVSGGIDS) coordinates ATP. D36 contributes to the Mg(2+) binding site. R117 lines the deamido-NAD(+) pocket. Residue T137 participates in ATP binding. E142 is a Mg(2+) binding site. The deamido-NAD(+) site is built by K150 and D157. Positions 166 and 188 each coordinate ATP. 234-235 (HK) is a deamido-NAD(+) binding site.

This sequence belongs to the NAD synthetase family. As to quaternary structure, homodimer.

The enzyme catalyses deamido-NAD(+) + NH4(+) + ATP = AMP + diphosphate + NAD(+) + H(+). It functions in the pathway cofactor biosynthesis; NAD(+) biosynthesis; NAD(+) from deamido-NAD(+) (ammonia route): step 1/1. Its function is as follows. Catalyzes the ATP-dependent amidation of deamido-NAD to form NAD. Uses ammonia as a nitrogen source. The sequence is that of NH(3)-dependent NAD(+) synthetase from Mannheimia succiniciproducens (strain KCTC 0769BP / MBEL55E).